Here is a 1218-residue protein sequence, read N- to C-terminus: MPANQRKNTSQSSYLQTPRNIATPLTKNAGKIVTTPKKSSTSDSSETSPTMAQTTTKSNGQLPTPPTNNGAPTVNRKKQKRRAKQAARAAAEQAQGSQMSGGPTSGDVKRQMQELEARFRETGLDEQYDDDEQFDPADENAYYSDEEGDAYSGSYGHDGSSTNGYAIPTTNSSKKQKKKKKSKSSQSDHSNHANHGPNGSSHNHVSLPLPLQSPPSMQRGPGISKEKIWNTSSQEERERIKEFWLSLGEDERKSLVKVEKDAVLKKMKEQQKHSCSCTVCGRKRTAIEEELEVLYDAYYEELEQYANHQGGDGPPPMMPPPRRFGAMSGLQPPNRLPPVFNGQQPSRGRIVEQLGDDEDEEGDEEYSEDDGDEDDFSEEEPEEIPRSHATDFFNFGNSLTVQGGILTVADDLLKNDGKKFIEMMEQLAERRMAREEDAKEQYANANYGHPSNGSMHPHSHGHVHNHPPPPEEDEYDDEEDDEDEYDSQEEDYDEEEMDSMTEEQRMEEGRRMFQIFAARMFEQRVLTAYKEKVAKERQQKLLEELEEESRADSQKKAKRAKDAQKKKEKLLEKKRAMAEEKARKDAEKAAEEASLREIEEKKAEAQRLKREENRKKKEAQKKADEEERVRKESEKQRRLQEQRERQAEQERKQREAKERERKEKEELRRQALEAKEIKEKEAKERKEKHEREKREKEAKVKADKEARELQKREELSAQQAAVQAAQSAAHVSRRANQVPTPKLSHALASPHIPVAIPAVPKAPTPIKLRTNSQQDNYSIPRTPSSKYQSISPNSVTPLPNSPGPIGPPGKTPIQHPLLQHPQATSPIHSALKGPPGIPQSPYAGMQPMPGGFQPGMPMVPPGFGRPHHDPMFGLQQGIGSQFRPLQIPNGGIPPFQPGFNIHHMPQGRGFPMHGPPGFPQHSPNGMGSIGQLFGAPKETPPSQTHSRNQSGSFDGLSSATQAQPIARPTPIGRPSSIVHGTRHSDNFNSGESDETSKHLGSSALLDDTDEPINIGVGARRSSAAPGNPGRQNFLPPPFGMDRSDPASMMSSFNTWGAPPNPFGSSSLPGSNGFGGGWNTSLNMNGSFGMTNYYHSQPRSVAVRLRICGACQNLQNSTQDGWLDIDAIKNEIALSTTVREEPLSERELLDICDTEGNPMNGGGTFEIRSSDGKSQIHFVSDSMSHDFRSAGAPGEIGSPISGGASRNLGPPGRAPIGGF.

Polar residues predominate over residues Met1–Thr26. 8 disordered regions span residues Met1–Arg237, Ala306–Asp391, Arg431–Glu508, Glu544–His745, Pro765–Lys810, Pro911–Glu1010, Ala1018–Pro1037, and Gly1190–Phe1218. Positions Thr34–Thr50 are enriched in low complexity. Residues Met51–Pro72 show a composition bias toward polar residues. Positions Asn75–Gln85 are enriched in basic residues. Over residues Ala86 to Gln95 the composition is skewed to low complexity. Residues Asp107–Gly123 show a composition bias toward basic and acidic residues. Positions Leu124 to Asp149 are enriched in acidic residues. Over residues Gly159 to Asn171 the composition is skewed to polar residues. The segment covering Lys174–Lys183 has biased composition (basic residues). The segment covering Ser206–Ser216 has biased composition (low complexity). A compositionally biased stretch (basic and acidic residues) spans Ser224–Arg237. Residues Gly313 to Arg322 are compositionally biased toward pro residues. The segment covering Leu354 to Glu382 has biased composition (acidic residues). Positions Ile421–Glu714 form a coiled coil. A compositionally biased stretch (basic and acidic residues) spans Arg431 to Glu440. Acidic residues predominate over residues Pro470 to Thr501. Basic and acidic residues predominate over residues Glu544–Leu715. The segment covering Ser716–His730 has biased composition (low complexity). Positions Arg769–Thr796 are enriched in polar residues. Residues Pro799–Lys810 are compositionally biased toward pro residues. Residues Pro940 to Gln963 show a composition bias toward polar residues.

It belongs to the NST1 family.

The protein resides in the cytoplasm. Its function is as follows. May act as a negative regulator of salt tolerance. The sequence is that of Stress response protein nst1 (nst1) from Botryotinia fuckeliana (strain B05.10) (Noble rot fungus).